Here is a 358-residue protein sequence, read N- to C-terminus: Phospho-N-acetylmuramoyl-pentapeptide-transferase (358 aa).

A run of 10 helical transmembrane segments spans residues 26–46 (AIYA…WLID), 70–90 (GTPT…TLLW), 94–114 (TNVY…VGFV), 134–154 (MLWL…YPPF), 169–189 (ELGL…SNAV), 197–217 (GLAI…AYLA), 234–254 (AGEL…FLWF), 261–281 (VFMG…IAVI), 286–306 (IVLV…IVQV), and 335–355 (KIIV…LSTL).

This sequence belongs to the glycosyltransferase 4 family. MraY subfamily. The cofactor is Mg(2+).

The protein resides in the cell inner membrane. The enzyme catalyses UDP-N-acetyl-alpha-D-muramoyl-L-alanyl-gamma-D-glutamyl-meso-2,6-diaminopimeloyl-D-alanyl-D-alanine + di-trans,octa-cis-undecaprenyl phosphate = di-trans,octa-cis-undecaprenyl diphospho-N-acetyl-alpha-D-muramoyl-L-alanyl-D-glutamyl-meso-2,6-diaminopimeloyl-D-alanyl-D-alanine + UMP. It participates in cell wall biogenesis; peptidoglycan biosynthesis. Its function is as follows. Catalyzes the initial step of the lipid cycle reactions in the biosynthesis of the cell wall peptidoglycan: transfers peptidoglycan precursor phospho-MurNAc-pentapeptide from UDP-MurNAc-pentapeptide onto the lipid carrier undecaprenyl phosphate, yielding undecaprenyl-pyrophosphoryl-MurNAc-pentapeptide, known as lipid I. In Syntrophotalea carbinolica (strain DSM 2380 / NBRC 103641 / GraBd1) (Pelobacter carbinolicus), this protein is Phospho-N-acetylmuramoyl-pentapeptide-transferase.